The chain runs to 470 residues: Glutamate--tRNA ligase (470 aa).

A 'HIGH' region motif is present at residues 15–25; it reads PSPTGFLHIGG. A 'KMSKS' region motif is present at residues 240–244; that stretch reads KLSKR. ATP is bound at residue lysine 243.

Belongs to the class-I aminoacyl-tRNA synthetase family. Glutamate--tRNA ligase type 1 subfamily. In terms of assembly, monomer.

Its subcellular location is the cytoplasm. It catalyses the reaction tRNA(Glu) + L-glutamate + ATP = L-glutamyl-tRNA(Glu) + AMP + diphosphate. Functionally, catalyzes the attachment of glutamate to tRNA(Glu) in a two-step reaction: glutamate is first activated by ATP to form Glu-AMP and then transferred to the acceptor end of tRNA(Glu). In Caulobacter vibrioides (strain ATCC 19089 / CIP 103742 / CB 15) (Caulobacter crescentus), this protein is Glutamate--tRNA ligase.